The following is an 84-amino-acid chain: Small ribosomal subunit protein eS27-like (84 aa).

Residues 1–16 (MPLARDLLHPSLDEEK) are compositionally biased toward basic and acidic residues. The tract at residues 1-23 (MPLARDLLHPSLDEEKKKHKKKR) is disordered. The C4-type zinc-finger motif lies at 38-60 (PGCYKITTVFSHAQTVVLCVGCS).

The protein belongs to the eukaryotic ribosomal protein eS27 family. The cofactor is Zn(2+).

This Bos taurus (Bovine) protein is Small ribosomal subunit protein eS27-like (RPS27L).